The following is a 272-amino-acid chain: Putative phosphoenolpyruvate synthase regulatory protein (272 aa).

152 to 159 serves as a coordination point for ADP; that stretch reads GVSRCGKT.

It belongs to the pyruvate, phosphate/water dikinase regulatory protein family. PSRP subfamily.

The catalysed reaction is [pyruvate, water dikinase] + ADP = [pyruvate, water dikinase]-phosphate + AMP + H(+). The enzyme catalyses [pyruvate, water dikinase]-phosphate + phosphate + H(+) = [pyruvate, water dikinase] + diphosphate. Its function is as follows. Bifunctional serine/threonine kinase and phosphorylase involved in the regulation of the phosphoenolpyruvate synthase (PEPS) by catalyzing its phosphorylation/dephosphorylation. This chain is Putative phosphoenolpyruvate synthase regulatory protein, found in Pseudomonas putida (strain ATCC 47054 / DSM 6125 / CFBP 8728 / NCIMB 11950 / KT2440).